Consider the following 401-residue polypeptide: MNSSTKIALVITLLDAMGIGLIMPVLPTLLREFIASEDIANHFGVLLALYALMQVIFAPWLGKMSDRFGRRPVLLLSLIGASLDYLLLAFSSALWMLYLGRLLSGITGATGAVAASVIADTTSASQRVKWFGWLGASFGLGLIAGPIIGGFAGEISPHSPFFIAALLNIVTFLVVMFWFRETKNTRDNTDTEVGVETQSNSVYITLFKTMPILLIIYFSAQLIGQIPATVWVLFTENRFGWNSMMVGFSLAGLGLLHSVFQAFVAGRIATKWGEKTAVLLGFIADSSAFAFLAFISEGWLVFPVLILLAGGGIALPALQGVMSIQTKSHQQGALQGLLVSLTNATGVIGPLLFAVIYNHSLPIWDGWIWIIGLAFYCIIILLSMTFMLTPQAQGSKQETSA.

Residues 1-6 lie on the Cytoplasmic side of the membrane; sequence MNSSTK. Residues 7–30 traverse the membrane as a helical segment; it reads IALVITLLDAMGIGLIMPVLPTLL. The Periplasmic portion of the chain corresponds to 31 to 42; that stretch reads REFIASEDIANH. Residues 43-61 form a helical membrane-spanning segment; the sequence is FGVLLALYALMQVIFAPWL. Over 62 to 71 the chain is Cytoplasmic; that stretch reads GKMSDRFGRR. The helical transmembrane segment at 72 to 91 threads the bilayer; that stretch reads PVLLLSLIGASLDYLLLAFS. Topologically, residues 92 to 98 are periplasmic; sequence SALWMLY. Residues 99 to 119 traverse the membrane as a helical segment; sequence LGRLLSGITGATGAVAASVIA. The Cytoplasmic portion of the chain corresponds to 120–129; that stretch reads DTTSASQRVK. The chain crosses the membrane as a helical span at residues 130-152; sequence WFGWLGASFGLGLIAGPIIGGFA. Topologically, residues 153 to 158 are periplasmic; the sequence is GEISPH. Residues 159–178 form a helical membrane-spanning segment; the sequence is SPFFIAALLNIVTFLVVMFW. The Cytoplasmic portion of the chain corresponds to 179–211; it reads FRETKNTRDNTDTEVGVETQSNSVYITLFKTMP. A helical membrane pass occupies residues 212–232; it reads ILLIIYFSAQLIGQIPATVWV. At 233–243 the chain is on the periplasmic side; that stretch reads LFTENRFGWNS. A helical transmembrane segment spans residues 244–265; the sequence is MMVGFSLAGLGLLHSVFQAFVA. Residues 266-275 are Cytoplasmic-facing; the sequence is GRIATKWGEK. A helical transmembrane segment spans residues 276-295; it reads TAVLLGFIADSSAFAFLAFI. Topologically, residues 296 to 298 are periplasmic; the sequence is SEG. Residues 299-322 form a helical membrane-spanning segment; the sequence is WLVFPVLILLAGGGIALPALQGVM. At 323–332 the chain is on the cytoplasmic side; the sequence is SIQTKSHQQG. Residues 333–356 traverse the membrane as a helical segment; it reads ALQGLLVSLTNATGVIGPLLFAVI. The Periplasmic portion of the chain corresponds to 357–365; that stretch reads YNHSLPIWD. Residues 366–387 traverse the membrane as a helical segment; the sequence is GWIWIIGLAFYCIIILLSMTFM. The Cytoplasmic portion of the chain corresponds to 388–401; the sequence is LTPQAQGSKQETSA.

It belongs to the major facilitator superfamily. TCR/Tet family.

It localises to the cell inner membrane. In terms of biological role, resistance to tetracycline by an active tetracycline efflux. This is an energy-dependent process that decreases the accumulation of the antibiotic in whole cells. This protein functions as a metal-tetracycline/H(+) antiporter. The polypeptide is Tetracycline resistance protein, class B (tetA) (Escherichia coli).